Consider the following 518-residue polypeptide: Bifunctional purine biosynthesis protein PurH (518 aa).

The region spanning 1 to 144 (MSKRALISVS…KNHAAVTVVC (144 aa)) is the MGS-like domain.

This sequence belongs to the PurH family.

It catalyses the reaction (6R)-10-formyltetrahydrofolate + 5-amino-1-(5-phospho-beta-D-ribosyl)imidazole-4-carboxamide = 5-formamido-1-(5-phospho-D-ribosyl)imidazole-4-carboxamide + (6S)-5,6,7,8-tetrahydrofolate. The catalysed reaction is IMP + H2O = 5-formamido-1-(5-phospho-D-ribosyl)imidazole-4-carboxamide. The protein operates within purine metabolism; IMP biosynthesis via de novo pathway; 5-formamido-1-(5-phospho-D-ribosyl)imidazole-4-carboxamide from 5-amino-1-(5-phospho-D-ribosyl)imidazole-4-carboxamide (10-formyl THF route): step 1/1. It functions in the pathway purine metabolism; IMP biosynthesis via de novo pathway; IMP from 5-formamido-1-(5-phospho-D-ribosyl)imidazole-4-carboxamide: step 1/1. In Lactococcus lactis subsp. cremoris (strain MG1363), this protein is Bifunctional purine biosynthesis protein PurH.